Reading from the N-terminus, the 762-residue chain is LON peptidase N-terminal domain and RING finger protein 1 (762 aa).

Residues 1 to 35 (MSSPAVARASPGGNREASGGPRSRNGPWEVGGGGE) are disordered. A TPR 1 repeat occupies 47-80 (WELLLRRGELLALGGHLKGALEAFAAALRRGAPA). The segment at 118–154 (CLSCRGFLSEPVTVPCGHSYCRRCLRRELRARCRLCR) adopts an RING-type 1 zinc-finger fold. TPR repeat units lie at residues 201-233 (ARAAGRLGELLHEGRYREALAAACDALRAEPSD), 235-267 (TLKIYRAESYAGLQEFKAALEDLNAVLFQLPNW), and 268-301 (PEVYFRKGKVLQDAGFLGDALQLFLQCLALDEDF). Ser420 bears the Phosphoserine mark. The RING-type 2 zinc finger occupies 468–506 (CSLCMRLFFEPVTTPCGHSFCKNCLERCLDHAPYCPLCK). Residues 547 to 757 (TAELSHLTKN…KIQHILTYFS (211 aa)) enclose the Lon N-terminal domain.

The protein is LON peptidase N-terminal domain and RING finger protein 1 (Lonrf1) of Mus musculus (Mouse).